We begin with the raw amino-acid sequence, 916 residues long: Probable dipeptidyl-aminopeptidase B (916 aa).

Disordered stretches follow at residues 1 to 35 and 67 to 86; these read MGRTGDLENAEFFPMTRRRSTSGTSSRSSTDSGLS and DAEADVDEPFLPTSSKKLGS. The Cytoplasmic portion of the chain corresponds to 1–92; it reads MGRTGDLENA…KLGSGSRTRQ (92 aa). Residues 21 to 35 are compositionally biased toward low complexity; it reads TSGTSSRSSTDSGLS. Residues 93–113 traverse the membrane as a helical; Signal-anchor for type II membrane protein segment; it reads IFWALVILCLGGWVLALVLFL. The Vacuolar segment spans residues 114-916; it reads THGRASSQTA…VKRSVPAFAH (803 aa). N-linked (GlcNAc...) asparagine glycans are attached at residues asparagine 349 and asparagine 640. Catalysis depends on serine 754, which acts as the Charge relay system. N-linked (GlcNAc...) asparagine glycans are attached at residues asparagine 808 and asparagine 813. Catalysis depends on charge relay system residues aspartate 831 and histidine 864.

It belongs to the peptidase S9B family.

The protein resides in the vacuole membrane. The catalysed reaction is Release of an N-terminal dipeptide, Xaa-Yaa-|-Zaa-, from a polypeptide, preferentially when Yaa is Pro, provided Zaa is neither Pro nor hydroxyproline.. Type IV dipeptidyl-peptidase which removes N-terminal dipeptides sequentially from polypeptides having unsubstituted N-termini provided that the penultimate residue is proline. The chain is Probable dipeptidyl-aminopeptidase B (dapB) from Aspergillus flavus (strain ATCC 200026 / FGSC A1120 / IAM 13836 / NRRL 3357 / JCM 12722 / SRRC 167).